Reading from the N-terminus, the 302-residue chain is Large ribosomal subunit protein uL29m (302 aa).

It belongs to the universal ribosomal protein uL29 family. As to quaternary structure, component of the mitochondrial large ribosomal subunit. Mature mitochondrial ribosomes consist of a small (37S) and a large (54S) subunit. The 37S subunit contains at least 33 different proteins and 1 molecule of RNA (15S). The 54S subunit contains at least 45 different proteins and 1 molecule of RNA (21S).

Its subcellular location is the mitochondrion. The polypeptide is Large ribosomal subunit protein uL29m (MRPL4) (Debaryomyces hansenii (strain ATCC 36239 / CBS 767 / BCRC 21394 / JCM 1990 / NBRC 0083 / IGC 2968) (Yeast)).